The sequence spans 339 residues: BTB/POZ domain-containing protein KCTD9 (339 aa).

The KHA domain maps to 3–82 (RVTLFLNGSP…PQTDARPPGG (80 aa)). Residue Ser-11 is modified to Phosphoserine. Residues 89-161 (DWLTLNVGGR…LRHGQLIVND (73 aa)) enclose the BTB domain. 3 Pentapeptide repeat domains span residues 223 to 247 (ANLQ…NFED), 253 to 292 (ANLE…NLRG), and 293 to 327 (ATLA…IFEE).

In terms of assembly, forms pentamers. Component of a complex mades of five KCTD9 and five CUL3 subunits.

It participates in protein modification; protein ubiquitination. Functionally, substrate-specific adapter of a BCR (BTB-CUL3-RBX1) E3 ubiquitin-protein ligase complex, which mediates the ubiquitination of target proteins, leading to their degradation by the proteasome. The sequence is that of BTB/POZ domain-containing protein KCTD9 (Kctd9) from Mus musculus (Mouse).